A 610-amino-acid chain; its full sequence is MRVTSLLWSSLVIPAAVGFQVRFKPSEDTALDTVDDGTLQSLLDNIGLNGSNAWDTRPGLVIASPSKKDPNYFFTWTRDSALVLKCITDAFAAGNTALQETIHEYISSQARIQLLNTRSGGLSSGGLGEPKYRVDETPYNEDWGRPQADGPALRATALIAYARWLLENDYYDVAKSIVWPVVKNDLSYVSEHWNTTAFDLWEEVNSPSFFTTIVQHRALVEGINIARALDETCPHCESQAPQALCYLQSYWTGTAVRSNYGQGRSGLDVASILGSIHTFDPEGECDDTTFQPCSARALANHKAVTDSFRSIYKINGGIKQGEAVAVGRYPEDVYFNGNPWYLATYAAAEQLYDAMYQWNKIGKITVTDVSMPFFKDIYPEVQTGTHESSSPEFGNIIAAVKAYAEGYIEVAKKYTPCTGMLSEQFSRDNGTPLSVADLTWSYASYLTVMARRNSVVPASWGEKNARDIPSTCVPSSATGPYQTATITHWPPNLTPTAQPSPCPTALPTKNNVRFRLLATTQVGEDVFLVGSIPELGSWDVKKAVPLNADIYADNCHQWYVDIELPTAVAFEYKFIRKRGGEVVWEQDPNRKYTVPQTCGVSGAIKRDTWR.

The signal sequence occupies residues 1-18; that stretch reads MRVTSLLWSSLVIPAAVG. Positions 19-24 are excised as a propeptide; sequence FQVRFK. A glycan (N-linked (GlcNAc...) asparagine) is linked at Asn-49. Trp-143 contributes to the substrate binding site. A glycan (N-linked (GlcNAc...) asparagine) is linked at Asn-194. Asp-199 (proton acceptor) is an active-site residue. The Proton donor role is filled by Glu-202. Intrachain disulfides connect Cys-233/Cys-236, Cys-245/Cys-472, and Cys-285/Cys-293. The CBM20 domain maps to 504–610; it reads TALPTKNNVR…SGAIKRDTWR (107 aa).

It belongs to the glycosyl hydrolase 15 family.

Its subcellular location is the secreted. It carries out the reaction Hydrolysis of terminal (1-&gt;4)-linked alpha-D-glucose residues successively from non-reducing ends of the chains with release of beta-D-glucose.. The chain is Glucoamylase ARB_02327-1 from Arthroderma benhamiae (strain ATCC MYA-4681 / CBS 112371) (Trichophyton mentagrophytes).